The sequence spans 431 residues: Tyrosine--tRNA ligase (431 aa).

An L-tyrosine-binding site is contributed by Tyr-34. Residues 39-48 carry the 'HIGH' region motif; the sequence is PTADSLHIGH. Tyr-171 and Gln-175 together coordinate L-tyrosine. Positions 231-235 match the 'KMSKS' region motif; that stretch reads KFGKT. Lys-234 provides a ligand contact to ATP. In terms of domain architecture, S4 RNA-binding spans 353–422; sequence INVVEALVKT…GKYTILRRGK (70 aa).

The protein belongs to the class-I aminoacyl-tRNA synthetase family. TyrS type 1 subfamily. Homodimer.

It is found in the cytoplasm. It catalyses the reaction tRNA(Tyr) + L-tyrosine + ATP = L-tyrosyl-tRNA(Tyr) + AMP + diphosphate + H(+). Its function is as follows. Catalyzes the attachment of tyrosine to tRNA(Tyr) in a two-step reaction: tyrosine is first activated by ATP to form Tyr-AMP and then transferred to the acceptor end of tRNA(Tyr). In Neisseria meningitidis serogroup A / serotype 4A (strain DSM 15465 / Z2491), this protein is Tyrosine--tRNA ligase.